We begin with the raw amino-acid sequence, 122 residues long: MIQPQTLLKVADNSGAKEIMCIRVLGGSKRKFGNISDVIVASVKSATPGGVVKKGEVVKAVIVRSAKGLRRADGSYIKFDENAAVIIKDDKQPRGTRIFGPVARELRDKEFNKILSLAPEVL.

This sequence belongs to the universal ribosomal protein uL14 family. In terms of assembly, part of the 50S ribosomal subunit. Forms a cluster with proteins L3 and L19. In the 70S ribosome, L14 and L19 interact and together make contacts with the 16S rRNA in bridges B5 and B8.

In terms of biological role, binds to 23S rRNA. Forms part of two intersubunit bridges in the 70S ribosome. This is Large ribosomal subunit protein uL14 from Clostridium botulinum (strain Alaska E43 / Type E3).